The chain runs to 224 residues: Tumor protein D52 (224 aa).

Residues Ser-36 and Ser-40 each carry the phosphoserine modification. Residues Ala-62–Asn-114 adopt a coiled-coil conformation. At Ser-176 the chain carries Phosphoserine. Residues Lys-187 to Leu-224 form a disordered region. The segment covering Asn-203 to Thr-213 has biased composition (low complexity). Ser-223 is subject to Phosphoserine.

This sequence belongs to the TPD52 family. As to quaternary structure, forms a homodimer or heterodimer with other members of the family. All isoforms interact with several 14-3-3 proteins. Isoform 2 is expressed in colon, breast, prostate, pancreas and kidney tumor cell lines. Isoform 2 is expressed at high levels in kidney, prostate, brain, small intestine and pancreas, at moderate levels in placenta and colon, at low levels in lung, liver and heart, and at very low levels in spleen, thymus, peripheral mononuclear blood cells, testis and ovary.

The protein is Tumor protein D52 (TPD52) of Homo sapiens (Human).